The following is an 88-amino-acid chain: Small ribosomal subunit protein uS17 (88 aa).

It belongs to the universal ribosomal protein uS17 family. Part of the 30S ribosomal subunit.

One of the primary rRNA binding proteins, it binds specifically to the 5'-end of 16S ribosomal RNA. The protein is Small ribosomal subunit protein uS17 of Teredinibacter turnerae (strain ATCC 39867 / T7901).